The following is a 371-amino-acid chain: Palmitoyl-monogalactosyldiacylglycerol delta-7 desaturase, chloroplastic (371 aa).

Residues 1 to 67 (MASLLTKPKP…KGLKRDVTTA (67 aa)) constitute a chloroplast transit peptide. The next 2 membrane-spanning stretches (helical) occupy residues 103–123 (FGAVAVVLSMHLLSLLAPFQF) and 127–147 (AVSVAFGLYIVTGLLGITLSF). The Histidine box-1 motif lies at 148–153 (HRNLSH). Positions 185–189 (HRYHH) match the Histidine box-2 motif. The chain crosses the membrane as a helical span at residues 251 to 271 (ALAVALYAMGGFPFIVWGMGV). The short motif at 317 to 321 (HNNHH) is the Histidine box-3 element.

Belongs to the fatty acid desaturase type 1 family. Fe(2+) is required as a cofactor. In terms of tissue distribution, highly expressed in young leaves. Low expression in roots.

Its subcellular location is the plastid. The protein resides in the chloroplast membrane. It carries out the reaction a 1-acyl-2-hexadecanoyl-glycerolipid + 2 reduced [2Fe-2S]-[ferredoxin] + O2 + 2 H(+) = a 1-acyl-2-[(7Z)-hexadecenoyl]-glycerolipid + 2 oxidized [2Fe-2S]-[ferredoxin] + 2 H2O. It participates in lipid metabolism; oxylipin biosynthesis. It functions in the pathway lipid metabolism; polyunsaturated fatty acid biosynthesis. Fatty acid desaturase involved in the first desaturation step leading to the formation of hexadeca 7,10,13-trienoic acid (16:3(7Z,10Z,13Z)), the major functional components of thylakoid membranes. Required for chloroplast biogenesis at low temperature. Also indirectly involved in the production of the oxylipin dinor-oxo-phyto-dienoic acid implicated in wound signaling. In Arabidopsis thaliana (Mouse-ear cress), this protein is Palmitoyl-monogalactosyldiacylglycerol delta-7 desaturase, chloroplastic.